A 226-amino-acid polypeptide reads, in one-letter code: Putative 5'-nucleotidase alr3139 (226 aa).

The a divalent metal cation site is built by Asp8, Asp9, Ser38, and Asn89.

The protein belongs to the SurE nucleotidase family. A divalent metal cation serves as cofactor.

The protein resides in the cytoplasm. The catalysed reaction is a ribonucleoside 5'-phosphate + H2O = a ribonucleoside + phosphate. Its function is as follows. Nucleotidase that shows phosphatase activity on nucleoside 5'-monophosphates. This is Putative 5'-nucleotidase alr3139 from Nostoc sp. (strain PCC 7120 / SAG 25.82 / UTEX 2576).